A 1070-amino-acid polypeptide reads, in one-letter code: Protocadherin-8 (1070 aa).

A signal peptide spans 1 to 29 (MSPAKRWGSPCLFPLQLFSLCWVLSVAQS). Cadherin domains lie at 30-135 (KTVR…APRF), 136-245 (PRAQ…SPAF), 247-354 (QGAV…APEI), 393-497 (QEAG…APIF), 498-609 (TKPV…SPIL), and 615-721 (ANGS…VPAS). The Extracellular segment spans residues 30–747 (KTVRYSTFEE…SGPSLQWDTP (718 aa)). The N-linked (GlcNAc...) asparagine glycan is linked to N616. The span at 716–725 (SAVPASSGSP) shows a compositional bias: low complexity. The tract at residues 716-740 (SAVPASSGSPEHSRPPGSRLAPSGP) is disordered. Residues 748–768 (LIVIIVLAGSCTLLLAAIIAI) traverse the membrane as a helical segment. At 769 to 1070 (ATTCNRRKKE…SPKKGINENV (302 aa)) the chain is on the cytoplasmic side. 3 disordered regions span residues 777 to 859 (KEVR…TGES), 906 to 928 (REAE…DSDS), and 1046 to 1070 (IGVP…NENV). Composition is skewed to basic and acidic residues over residues 780–790 (RKGGALREERP) and 906–921 (REAE…KGDS). Position 1053 is a phosphoserine (S1053).

The N-terminal extracellular domain forms homophilic interactions; these interactions activate p38 MAPK via TAOK2 and trigger endocytosis. Interacts with CDH2; this interaction may lead to CDH2 cointernalization. Interacts with CDH11. Interacts with TAOK2.

The protein resides in the cell membrane. The protein localises to the cell projection. It localises to the dendrite. It is found in the presynaptic cell membrane. Its subcellular location is the postsynaptic cell membrane. In terms of biological role, calcium-dependent cell-adhesion protein. May play a role in activity-induced synaptic reorganization underlying long term memory. Could be involved in CDH2 internalization through TAOK2/p38 MAPK pathway. In hippocampal neurons, may play a role in the down-regulation of dendritic spines, maybe through its action on CDH2 endocytosis. This Mus musculus (Mouse) protein is Protocadherin-8 (Pcdh8).